The primary structure comprises 613 residues: Methionine--tRNA ligase (613 aa).

The short motif at 15 to 25 is the 'HIGH' region element; that stretch reads PYANGPRHIGH. Positions 147, 150, 160, and 163 each coordinate Zn(2+). The 'KMSKS' region motif lies at 351 to 355; it reads KFSSS. Ser354 contacts ATP.

This sequence belongs to the class-I aminoacyl-tRNA synthetase family. MetG type 1 subfamily. Monomer. The cofactor is Zn(2+).

Its subcellular location is the cytoplasm. The enzyme catalyses tRNA(Met) + L-methionine + ATP = L-methionyl-tRNA(Met) + AMP + diphosphate. Its function is as follows. Is required not only for elongation of protein synthesis but also for the initiation of all mRNA translation through initiator tRNA(fMet) aminoacylation. The chain is Methionine--tRNA ligase from Corynebacterium efficiens (strain DSM 44549 / YS-314 / AJ 12310 / JCM 11189 / NBRC 100395).